The sequence spans 469 residues: MNRLFRALPSVDALLTALTTPTHGHDTFADLPRALLRDLVNDFLDARREDIRQGRIDAPESLAAERLLPSLVQSVGRRSRAHFRRVLNGTGVVIHTNLGRSLLAPAATEAVAAACAHYSNLEFDLDTGERGSRYSHVEQLLCRVTGAEAGLVVNNNAAAVLLVLDTLCKGGEVVVSRGQLVEIGGSFRIPDVMEKSGATLREVGATNRTHLRDYENAINEKTVALLRVHTSNYRVVGFHKEVPLDELVALGRARDLPVIEDLGSGSFLDFTPWGLPGEPTVQSVVGAGPDVITFSGDKVLGGPQAGLIVGRRQWIDRIKRNPLNRALRIDKMTLAALEATLRLYLDPERARNEVPTLRMMTASPDELARRARRLAARLRKALGDAARVGTVPGVSRVGGGSFPERDLPTTLVEVAPASCTATVLKTRLLDTDPPLVGRLENDTFRLDPRTLDDVEFAPVATALRQALGL.

Lys298 carries the N6-(pyridoxal phosphate)lysine modification.

The protein belongs to the SelA family. The cofactor is pyridoxal 5'-phosphate.

It is found in the cytoplasm. It carries out the reaction L-seryl-tRNA(Sec) + selenophosphate + H(+) = L-selenocysteinyl-tRNA(Sec) + phosphate. It participates in aminoacyl-tRNA biosynthesis; selenocysteinyl-tRNA(Sec) biosynthesis; selenocysteinyl-tRNA(Sec) from L-seryl-tRNA(Sec) (bacterial route): step 1/1. Its function is as follows. Converts seryl-tRNA(Sec) to selenocysteinyl-tRNA(Sec) required for selenoprotein biosynthesis. The polypeptide is L-seryl-tRNA(Sec) selenium transferase (Nitratidesulfovibrio vulgaris (strain ATCC 29579 / DSM 644 / CCUG 34227 / NCIMB 8303 / VKM B-1760 / Hildenborough) (Desulfovibrio vulgaris)).